The primary structure comprises 431 residues: Enolase (431 aa).

Gln-163 serves as a coordination point for (2R)-2-phosphoglycerate. The active-site Proton donor is the Glu-205. Residues Asp-242, Glu-288, and Asp-315 each contribute to the Mg(2+) site. 4 residues coordinate (2R)-2-phosphoglycerate: Lys-340, Arg-369, Ser-370, and Lys-391. Lys-340 (proton acceptor) is an active-site residue.

Belongs to the enolase family. Mg(2+) serves as cofactor.

The protein localises to the cytoplasm. It localises to the secreted. It is found in the cell surface. The enzyme catalyses (2R)-2-phosphoglycerate = phosphoenolpyruvate + H2O. Its pathway is carbohydrate degradation; glycolysis; pyruvate from D-glyceraldehyde 3-phosphate: step 4/5. Its function is as follows. Catalyzes the reversible conversion of 2-phosphoglycerate (2-PG) into phosphoenolpyruvate (PEP). It is essential for the degradation of carbohydrates via glycolysis. The chain is Enolase from Bacillus cereus (strain B4264).